Here is a 170-residue protein sequence, read N- to C-terminus: Thialysine N-epsilon-acetyltransferase (170 aa).

Residues 4-166 (VMIREAKEGD…FRFEGEAMRE (163 aa)) enclose the N-acetyltransferase domain. Residue 27–28 (YE) participates in substrate binding. The residue at position 29 (Lys-29) is an N6-acetyllysine. Glu-92 contacts substrate. Acetyl-CoA contacts are provided by residues 94 to 96 (IYV), 102 to 107 (GQGIGS), 133 to 135 (NKR), and Tyr-140. Residue Tyr-140 is the Proton donor of the active site. Glu-152 contacts substrate.

The protein belongs to the acetyltransferase family. As to quaternary structure, homodimer.

The protein resides in the cytoplasm. The enzyme catalyses S-(2-aminoethyl)-L-cysteine + acetyl-CoA = S-(2-acetamidoethyl)-L-cysteine + CoA + H(+). It carries out the reaction an alkane-alpha,omega-diamine + acetyl-CoA = an N-acetylalkane-alpha,omega-diamine + CoA + H(+). Its function is as follows. Catalyzes the N-acetylation of the amino acid thialysine (S-(2-aminoethyl)-L-cysteine), a L-lysine analog with the 4-methylene group substituted with a sulfur. May also catalyze acetylation of polyamines, such as norspermidine, spermidine or spermine. However, ability to acetylate polyamines is weak, suggesting that it does not act as a diamine acetyltransferase in vivo. The protein is Thialysine N-epsilon-acetyltransferase of Bos taurus (Bovine).